A 393-amino-acid polypeptide reads, in one-letter code: N-acyl-phosphatidylethanolamine-hydrolyzing phospholipase D (393 aa).

Met1 is subject to N-acetylmethionine. Residues 1–16 (MDENESNQSLMTSSQY) show a composition bias toward polar residues. The interval 1–40 (MDENESNQSLMTSSQYPKEAVRKRQNSARNSGASDSSRFS) is disordered. Residues His185 and His187 each contribute to the Zn(2+) site. An an N-acyl-1,2-diacyl-sn-glycero-3-phosphoethanolamine-binding site is contributed by Tyr188. Positions 189, 190, and 253 each coordinate Zn(2+). Deoxycholate-binding residues include Lys256 and Met260. Asp284 lines the Zn(2+) pocket. His321 is an an N-acyl-1,2-diacyl-sn-glycero-3-phosphoethanolamine binding site. His343 is a Zn(2+) binding site. Residue Ala348 coordinates deoxycholate.

It belongs to the NAPE-PLD family. In terms of assembly, homodimer. Bile acids promote the assembly of inactive monomers into an active dimer and enable catalysis. Zn(2+) is required as a cofactor. Widely expressed. Highest expression in brain, kidney and testis (at protein level). Expressed in adipose tissue (at protein level).

Its subcellular location is the golgi apparatus membrane. The protein resides in the early endosome membrane. The protein localises to the nucleus envelope. It localises to the nucleus. It is found in the nucleoplasm. It carries out the reaction an N-acyl-1,2-diacyl-sn-glycero-3-phosphoethanolamine + H2O = an N-acylethanolamine + a 1,2-diacyl-sn-glycero-3-phosphate + H(+). It catalyses the reaction N-butanoyl-1-hexadecanoyl-2-(9Z,12Z-octadecadienoyl)-sn-glycero-3-phosphoethanolamine + H2O = N-butanoyl ethanolamine + 1-hexadecanoyl-2-(9Z,12Z-octadecadienoyl)-sn-glycero-3-phosphate + H(+). The catalysed reaction is N-hexanoyl-1-hexadecanoyl-2-(9Z,12Z-octadecadienoyl)-sn-glycero-3-phosphoethanolamine + H2O = N-hexanoyl ethanolamine + 1-hexadecanoyl-2-(9Z,12Z-octadecadienoyl)-sn-glycero-3-phosphate + H(+). The enzyme catalyses N-octanoyl-1-hexadecanoyl-2-(9Z,12Z-octadecadienoyl)-sn-glycero-3-phosphoethanolamine + H2O = N-octanoyl ethanolamine + 1-hexadecanoyl-2-(9Z,12Z-octadecadienoyl)-sn-glycero-3-phosphate + H(+). It carries out the reaction N-decanoyl-1-hexadecanoyl-2-(9Z,12Z-octadecadienoyl)-sn-glycero-3-phosphoethanolamine + H2O = N-decanoyl ethanolamine + 1-hexadecanoyl-2-(9Z,12Z-octadecadienoyl)-sn-glycero-3-phosphate + H(+). It catalyses the reaction N-dodecanoyl-1,2-di-(9Z-octadecenoyl)-sn-glycero-3-phosphoethanolamine + H2O = N-dodecanoylethanolamine + 1,2-di-(9Z-octadecenoyl)-sn-glycero-3-phosphate + H(+). The catalysed reaction is N-tetradecanoyl-1,2-di-(9Z-octadecenoyl)-sn-glycero-3-phosphoethanolamine + H2O = N-tetradecanoylethanolamine + 1,2-di-(9Z-octadecenoyl)-sn-glycero-3-phosphate + H(+). The enzyme catalyses N-hexadecanoyl-1,2-di-(9Z-octadecenoyl)-sn-glycero-3-phosphoethanolamine + H2O = N-hexadecanoylethanolamine + 1,2-di-(9Z-octadecenoyl)-sn-glycero-3-phosphate + H(+). It carries out the reaction N,1-dihexadecanoyl-2-(9Z,12Z-octadecadienoyl)-sn-glycero-3-phosphoethanolamine + H2O = 1-hexadecanoyl-2-(9Z,12Z-octadecadienoyl)-sn-glycero-3-phosphate + N-hexadecanoylethanolamine + H(+). It catalyses the reaction N-octadecanoyl-1,2-di-(9Z-octadecenoyl)-sn-glycero-3-phosphoethanolamine + H2O = N-octadecanoyl ethanolamine + 1,2-di-(9Z-octadecenoyl)-sn-glycero-3-phosphate + H(+). The catalysed reaction is N,1,2-tri-(9Z-octadecenoyl)-sn-glycero-3-phosphoethanolamine + H2O = N-(9Z-octadecenoyl) ethanolamine + 1,2-di-(9Z-octadecenoyl)-sn-glycero-3-phosphate + H(+). The enzyme catalyses N-(5Z,8Z,11Z,14Z-eicosatetraenoyl)-1,2-diacyl-sn-glycero-3-phosphoethanolamine + H2O = N-(5Z,8Z,11Z,14Z-eicosatetraenoyl)-ethanolamine + a 1,2-diacyl-sn-glycero-3-phosphate + H(+). It carries out the reaction N-(5Z,8Z,11Z,14Z-eicosatetraenoyl)-1,2-di-(9Z-octadecenoyl)-sn-glycero-3-phosphoethanolamine + H2O = N-(5Z,8Z,11Z,14Z-eicosatetraenoyl)-ethanolamine + 1,2-di-(9Z-octadecenoyl)-sn-glycero-3-phosphate + H(+). It catalyses the reaction 1-O-(1Z-octadecenoyl)-2-(9Z-octadecenoyl)-sn-glycero-3-phospho-N-hexadecanoyl-ethanolamine + H2O = 1-O-(1Z-octadecenoyl)-2-(9Z-octadecenoyl)-sn-glycero-3-phosphate + N-hexadecanoylethanolamine + H(+). The catalysed reaction is N,1-diacyl-sn-glycero-3-phosphoethanolamine + H2O = an N-acylethanolamine + a 1-acyl-sn-glycero-3-phosphate + H(+). The enzyme catalyses N,1-dihexadecanoyl-sn-glycero-3-phosphoethanolamine + H2O = N-hexadecanoylethanolamine + 1-hexadecanoyl-sn-glycero-3-phosphate + H(+). It carries out the reaction N-(5Z,8Z,11Z,14Z-eicosatetraenoyl)-1-(9Z-octadecenoyl)-sn-glycero-3-phosphoethanolamine + H2O = N-(5Z,8Z,11Z,14Z-eicosatetraenoyl)-ethanolamine + 1-(9Z-octadecenoyl)-sn-glycero-3-phosphate + H(+). Activated by divalent cations. Activated by bile acids and their conjugates, except for lithocholic acid which is rather inhibitory. Binding of deoxycholic acid favors the selective release of anandamide and likely other unsatured long FAEs. Inhibited by phosphatidylethanolamines. Functionally, D-type phospholipase that hydrolyzes N-acyl-phosphatidylethanolamines (NAPEs) to produce bioactive N-acylethanolamines/fatty acid ethanolamides (NAEs/FAEs) and phosphatidic acid. Cleaves the terminal phosphodiester bond of diacyl- and alkenylacyl-NAPEs, primarily playing a role in the generation of long-chain saturated and monounsaturated NAEs in the brain. May control NAPE homeostasis in dopaminergic neuron membranes and regulate neuron survival, partly through RAC1 activation. As a regulator of lipid metabolism in the adipose tissue, mediates the crosstalk between adipocytes, gut microbiota and immune cells to control body temperature and weight. In particular, regulates energy homeostasis by promoting cold-induced brown or beige adipocyte differentiation program to generate heat from fatty acids and glucose. Has limited D-type phospholipase activity toward N-acyl lyso-NAPEs. In Homo sapiens (Human), this protein is N-acyl-phosphatidylethanolamine-hydrolyzing phospholipase D (NAPEPLD).